We begin with the raw amino-acid sequence, 492 residues long: Protein adenylyltransferase Fic (492 aa).

Over residues 1–17 (MCMEAEPPSPPAQQQEQ) the composition is skewed to low complexity. Residues 1 to 21 (MCMEAEPPSPPAQQQEQVNPP) are disordered. A helical membrane pass occupies residues 33–55 (LYRLVLLFVAGSLAAWTFHALSS). 2 TPR repeats span residues 118–151 (ALGA…APRH) and 152–186 (PEVL…SPSN). An Inhibitory (S/T)XXXE(G/N) motif motif is present at residues 243 to 248 (SVGIEG). ATP contacts are provided by residues E247 and 328–331 (VGGH). One can recognise a Fido domain in the interval 297–432 (ITIKDILELH…IRPFVRFIAD (136 aa)). The active site involves H375. ATP is bound by residues 379-386 (DGNGRTSR), 411-412 (YY), and N419.

Belongs to the fic family. As to quaternary structure, homodimer.

It is found in the membrane. The catalysed reaction is L-tyrosyl-[protein] + ATP = O-(5'-adenylyl)-L-tyrosyl-[protein] + diphosphate. It carries out the reaction L-threonyl-[protein] + ATP = 3-O-(5'-adenylyl)-L-threonyl-[protein] + diphosphate. It catalyses the reaction 3-O-(5'-adenylyl)-L-threonyl-[protein] + H2O = L-threonyl-[protein] + AMP + H(+). With respect to regulation, the side chain of Glu-247 determines which of the two opposing activities (AMPylase or de-AMPylase) will take place. In response to endoplasmic reticulum stress, mediates de-AMPylase activity. Adenylyltransferase activity is inhibited by the inhibitory helix present at the N-terminus: Glu-247 binds ATP and competes with ATP-binding at Arg-386, thereby preventing adenylyltransferase activity. In unstressed cells, disengagement of Glu-247 promotes adenylyltransferase activity. Activation dissociates ATP-binding from Glu-247, allowing ordered binding of the entire ATP moiety with the alpha-phosphate in an orientation that is productive for accepting an incoming target hydroxyl side chain. In terms of biological role, protein that can both mediate the addition of adenosine 5'-monophosphate (AMP) to specific residues of target proteins (AMPylation), and the removal of the same modification from target proteins (de-AMPylation), depending on the context. The side chain of Glu-247 determines which of the two opposing activities (AMPylase or de-AMPylase) will take place. Acts as a key regulator of the unfolded protein response (UPR) by mediating AMPylation or de-AMPylation of Hsc70-3/BiP. In unstressed cells, acts as an adenylyltransferase by mediating AMPylation of Hsc70-3/BiP at 'Thr-518', thereby inactivating it. In response to endoplasmic reticulum stress, acts as a phosphodiesterase by mediating removal of ATP (de-AMPylation) from Hsc70-3/BiP at 'Thr-518', leading to restore HSPA5/BiP activity. The protein is Protein adenylyltransferase Fic of Drosophila simulans (Fruit fly).